Reading from the N-terminus, the 378-residue chain is MISFSSITDSPKLNLDDVSDWYITNTIIKDPPKGITTRRIIKVGEDNDLLNAEDDSTDRNDAILQFARNVNPMVSVQYNNTGLGFGRSSNEAFLPYRIIKDGAFRPPIVDLRDLMPLSRQPRNTTSINTSAEFIDFSKGIKPSENALKRNEVLNTLKTIPMCSNKGYNFKTGIDQPYDVVYHIEDKPQRIKQALYEYTEDNIGRNVIDGVTQNIYEGFVSPETNKTFSTFRDETSGMVEGFSGRIPISKNDSNWQQHPHMQFKNLQNVTIATNANGNVTKDNISRVEKDRERNLPLYSVKTHKIYKGLHVNYLNGQEDRTCTTGMINPKKQRQTYSYGNNGQGGGGGNKPITIKIREQNNLGYGFNAIRDNEGVKINY.

This sequence belongs to the IIV-6 329R family.

This is an uncharacterized protein from Acheta domesticus (House cricket).